The chain runs to 200 residues: Recombination protein RecR (200 aa).

The C4-type zinc finger occupies 57-72 (CQECRTFTEQDVCHIC). The region spanning 81–176 (GQLCVVESPA…TASRIAHGVP (96 aa)) is the Toprim domain.

It belongs to the RecR family.

Functionally, may play a role in DNA repair. It seems to be involved in an RecBC-independent recombinational process of DNA repair. It may act with RecF and RecO. The polypeptide is Recombination protein RecR (Vibrio cholerae serotype O1 (strain ATCC 39541 / Classical Ogawa 395 / O395)).